A 167-amino-acid polypeptide reads, in one-letter code: Leptin (167 aa).

The signal sequence occupies residues 1 to 21; the sequence is MRCGSLCRFLWLWSCLPYIEA. Cysteine 117 and cysteine 167 are joined by a disulfide.

It belongs to the leptin family.

The protein localises to the secreted. Functionally, key player in the regulation of energy balance and body weight control. Once released into the circulation, has central and peripheral effects by binding LEPR, found in many tissues, which results in the activation of several major signaling pathways. In the hypothalamus, acts as an appetite-regulating factor that induces a decrease in food intake and an increase in energy consumption by inducing anorexinogenic factors and suppressing orexigenic neuropeptides, also regulates bone mass and secretion of hypothalamo-pituitary-adrenal hormones. In the periphery, increases basal metabolism, influences reproductive function, regulates pancreatic beta-cell function and insulin secretion, is pro-angiogenic for endothelial cell and affects innate and adaptive immunity. In the arcuate nucleus of the hypothalamus, activates by depolarization POMC neurons inducing FOS and SOCS3 expression to release anorexigenic peptides and inhibits by hyperpolarization NPY neurons inducing SOCS3 with a consequent reduction on release of orexigenic peptides. In addition to its known satiety inducing effect, has a modulatory role in nutrient absorption. In the intestine, reduces glucose absorption by enterocytes by activating PKC and leading to a sequential activation of p38, PI3K and ERK signaling pathways which exerts an inhibitory effect on glucose absorption. Acts as a growth factor on certain tissues, through the activation of different signaling pathways increases expression of genes involved in cell cycle regulation such as CCND1, via JAK2-STAT3 pathway, or VEGFA, via MAPK1/3 and PI3K-AKT1 pathways. May also play an apoptotic role via JAK2-STAT3 pathway and up-regulation of BIRC5 expression. Pro-angiogenic, has mitogenic activity on vascular endothelial cells and plays a role in matrix remodeling by regulating the expression of matrix metalloproteinases (MMPs) and tissue inhibitors of metalloproteinases (TIMPs). In innate immunity, modulates the activity and function of neutrophils by increasing chemotaxis and the secretion of oxygen radicals. Increases phagocytosis by macrophages and enhances secretion of pro-inflammatory mediators. Increases cytotoxic ability of NK cells. Plays a pro-inflammatory role, in synergy with IL1B, by inducing NOS2 which promotes the production of IL6, IL8 and Prostaglandin E2, through a signaling pathway that involves JAK2, PI3K, MAP2K1/MEK1 and MAPK14/p38. In adaptive immunity, promotes the switch of memory T-cells towards T helper-1 cell immune responses. Increases CD4(+)CD25(-) T-cell proliferation and reduces autophagy during TCR (T-cell receptor) stimulation, through MTOR signaling pathway activation and BCL2 up-regulation. In Halichoerus grypus (Gray seal), this protein is Leptin (LEP).